The sequence spans 40 residues: Photosystem I reaction center subunit IX (40 aa).

A helical transmembrane segment spans residues 12–34; the sequence is APVLLTAWMSLTAGMIIEIQRFF.

This sequence belongs to the PsaJ family.

The protein resides in the plastid. It is found in the chloroplast thylakoid membrane. Functionally, may help in the organization of the PsaE and PsaF subunits. This chain is Photosystem I reaction center subunit IX, found in Emiliania huxleyi (Coccolithophore).